Here is a 507-residue protein sequence, read N- to C-terminus: MEKLQYELQGYLEIDRYRKQRFLYPLLFREYIYALAHDHGLNSSIFYEPTENLGYDNDNKSSSLIVKRLITRLHQQNHLTISVNDSRFVGPNRSFYSQTIPEGFAGIMEIPFSVRLVSSLERERIAKYHNLRSIHSIFPFLEDKLSHLYYVSDILIPYPIHLEILLQTLRTRIRDAPSLHLLRCFLHEHHNWNSLITSNKSISIFSKENQRLFLFLYNSHVYECESVLVFLRKQSSHLRSISSLAFLERTHFYGKIKHLVVTPRNDSQRTLPLWFFKEPLMHYVRYQGKSIMASRCTNLLMKKWKYYLVNFWQCHFHLWSQPGRIHINELSNHSFYFLGYLSGVRLTPWVIRSQMLENSFMIDTAIKRFDTIVPIFPLIGSLVKAKFCNVSGYPISKSVWADSSDSDIIARFGWICRNLSHYHSGSSKKHSLCRIKYILRLSCARTLARKHKSTVRAICKRLGSKLLEEFLTEEHEIVSFIFRRTRLRSERIWYLDIIRIHGLVPHS.

The protein belongs to the intron maturase 2 family. MatK subfamily.

The protein localises to the plastid. Its subcellular location is the chloroplast. Functionally, usually encoded in the trnK tRNA gene intron. Probably assists in splicing its own and other chloroplast group II introns. The chain is Maturase K from Nymphaea alba (White water-lily).